We begin with the raw amino-acid sequence, 87 residues long: MKRLLLQNVCDLSNNMNGLRFPCFVKSGNAEVSALHHYVPDLHRRMLLATLWNTYICINEALALTLSDFSLVPPHPYRQLFTLTTFQ.

This is an uncharacterized protein from Escherichia coli.